The primary structure comprises 477 residues: SH3 domain-binding protein 5 homolog (477 aa).

Residues 12–95 (QIQIELENLN…AAVKFQRANE (84 aa)) are a coiled coil. Phosphoserine is present on residues Ser113 and Ser115. A coiled-coil region spans residues 122-221 (NAWQEMLNHA…YSTALRNLER (100 aa)). 2 disordered regions span residues 224 to 258 (EDIH…ALPS) and 276 to 306 (GSQM…ETGA). Positions 291-305 (ETEDEEDACDYDETG) are enriched in acidic residues.

Belongs to the SH3BP5 family.

The protein is SH3 domain-binding protein 5 homolog (pcs) of Drosophila melanogaster (Fruit fly).